A 269-amino-acid polypeptide reads, in one-letter code: Hydroxyethylthiazole kinase (269 aa).

Residue M43 participates in substrate binding. 2 residues coordinate ATP: R119 and S165. A192 lines the substrate pocket.

The protein belongs to the Thz kinase family. Mg(2+) serves as cofactor.

The enzyme catalyses 5-(2-hydroxyethyl)-4-methylthiazole + ATP = 4-methyl-5-(2-phosphooxyethyl)-thiazole + ADP + H(+). It participates in cofactor biosynthesis; thiamine diphosphate biosynthesis; 4-methyl-5-(2-phosphoethyl)-thiazole from 5-(2-hydroxyethyl)-4-methylthiazole: step 1/1. Its function is as follows. Catalyzes the phosphorylation of the hydroxyl group of 4-methyl-5-beta-hydroxyethylthiazole (THZ). The chain is Hydroxyethylthiazole kinase from Glaesserella parasuis serovar 5 (strain SH0165) (Haemophilus parasuis).